Reading from the N-terminus, the 401-residue chain is Homocysteine-responsive endoplasmic reticulum-resident ubiquitin-like domain member 2 protein (401 aa).

In terms of domain architecture, Ubiquitin-like spans 10-89; sequence VTLIIKAPNQ…HMVHLVCASR (80 aa). A disordered region spans residues 87–137; that stretch reads ASRSPPSSPKSSTDGESHGALASSTNSNSDHSDSTTPSPSQESLSLVAGSS. 2 stretches are compositionally biased toward low complexity: residues 88–98 and 109–126; these read SRSPPSSPKSS and SSTN…PSPS. The helical transmembrane segment at 299-319 threads the bilayer; that stretch reads FIMVMGAMLLVYLHQAGWFPF.

It is found in the membrane. Could be involved in the unfolded protein response (UPR) pathway. The sequence is that of Homocysteine-responsive endoplasmic reticulum-resident ubiquitin-like domain member 2 protein (Herpud2) from Rattus norvegicus (Rat).